The chain runs to 468 residues: Lipase 1 (468 aa).

The N-terminal stretch at 1-16 (MRGIAVFLAFISLIFA) is a signal peptide. Asn-79 is a glycosylation site (N-linked (GlcNAc...) asparagine). A disulfide bond links Cys-112 and Cys-285. Ser-196 serves as the catalytic Charge relay system. Residues Asn-231 and Asn-319 are each glycosylated (N-linked (GlcNAc...) asparagine). Active-site charge relay system residues include Asp-348 and His-381. An intrachain disulfide couples Cys-364 to Cys-409. N-linked (GlcNAc...) asparagine glycans are attached at residues Asn-417, Asn-422, and Asn-451.

The protein belongs to the AB hydrolase superfamily. Lipase family. Class Lip subfamily.

It localises to the secreted. The catalysed reaction is a triacylglycerol + H2O = a diacylglycerol + a fatty acid + H(+). Its function is as follows. Secreted lipase that is able to hydrolyze both the neutral triacylglycerols and the monopalmitate ester Tween 40, allowing the use of hydrolyzed products as carbon sources. Has broad lipolytic activity, which may be important for colonization and subsequent infection, therefore contributing to the persistence and virulence in human tissue. The chain is Lipase 1 from Candida albicans (strain SC5314 / ATCC MYA-2876) (Yeast).